The chain runs to 490 residues: Prostaglandin E2 receptor EP4 subtype (490 aa).

Over 1-19 (MSTPGVNASASLSPDRLNS) the chain is Extracellular. Asn-7 is a glycosylation site (N-linked (GlcNAc...) asparagine). The helical transmembrane segment at 20–43 (PVTIPAVMFIFGVVGNLVAIVVLC) threads the bilayer. At 44–55 (KSRKEQKETTFY) the chain is on the cytoplasmic side. Residues 56–79 (TLVCGLAVTDLLGTLLVSPVTIAT) form a helical membrane-spanning segment. Residues 80-96 (YMKGQWPGGQPLCEYST) lie on the Extracellular side of the membrane. Cys-92 and Cys-170 are oxidised to a cystine. A helical transmembrane segment spans residues 97-115 (FILLFFSLSGLSIICAMSV). Over 116–135 (ERYLAINHAYFYSHYVDKRL) the chain is Cytoplasmic. The helical transmembrane segment at 136-160 (AGLTLFAVYASNVLFCALPNMGLGS) threads the bilayer. At 161 to 184 (SRLQYPDTWCFIDWTTNVTAHAAY) the chain is on the extracellular side. The chain crosses the membrane as a helical span at residues 185-211 (SYMYAGFSSFLILATVLCNVLVCGALL). At 212–269 (RMHRQFMRRTSLGTEQHHAAAAAVTSVASRGHPAASPALPRLSDFRRRRSFRRIAGAE) the chain is on the cytoplasmic side. A helical transmembrane segment spans residues 270–297 (IQMVILLIATSLVVLICSIPLVVRVFVN). The Extracellular portion of the chain corresponds to 298–314 (QLYQPSLEREVSKNPDL). Residues 315-334 (QAIRIASVNPILDPWIYILL) traverse the membrane as a helical segment. At 335–490 (RKTVLSKAIE…ETLNLSEKCI (156 aa)) the chain is on the cytoplasmic side. The segment at 359–378 (ERSGQHCSDSQRTSSAMSGH) is disordered. Polar residues predominate over residues 363–378 (QHCSDSQRTSSAMSGH). 4 positions are modified to phosphoserine: Ser-376, Ser-379, Ser-381, and Ser-384. Polar residues predominate over residues 439–451 (SETSDSSQGQDSE). The tract at residues 439–477 (SETSDSSQGQDSESVLLVDEAGGSGRAGPAPKGSSLQVT) is disordered.

The protein belongs to the G-protein coupled receptor 1 family. Interacts with FEM1A. In terms of processing, phosphorylation mediates agonist-mediated desensitization by promoting cytoplasmic retention.

Its subcellular location is the cell membrane. Functionally, receptor for prostaglandin E2 (PGE2). The activity of this receptor is mediated by G(s) proteins that stimulate adenylate cyclase. Has a relaxing effect on smooth muscle. May play an important role in regulating renal hemodynamics, intestinal epithelial transport, adrenal aldosterone secretion, and uterine function. This is Prostaglandin E2 receptor EP4 subtype (PTGER4) from Pan troglodytes (Chimpanzee).